The sequence spans 360 residues: Peptide chain release factor 1 (360 aa).

Glutamine 233 carries the N5-methylglutamine modification. Positions 283 to 305 (KLDAERAADRRSQVGSGDRSERI) are disordered.

It belongs to the prokaryotic/mitochondrial release factor family. Post-translationally, methylated by PrmC. Methylation increases the termination efficiency of RF1.

The protein localises to the cytoplasm. Peptide chain release factor 1 directs the termination of translation in response to the peptide chain termination codons UAG and UAA. This Methylocella silvestris (strain DSM 15510 / CIP 108128 / LMG 27833 / NCIMB 13906 / BL2) protein is Peptide chain release factor 1.